The sequence spans 122 residues: Large ribosomal subunit protein uL14 (122 aa).

Belongs to the universal ribosomal protein uL14 family. In terms of assembly, part of the 50S ribosomal subunit. Forms a cluster with proteins L3 and L19. In the 70S ribosome, L14 and L19 interact and together make contacts with the 16S rRNA in bridges B5 and B8.

In terms of biological role, binds to 23S rRNA. Forms part of two intersubunit bridges in the 70S ribosome. This is Large ribosomal subunit protein uL14 from Spiroplasma citri.